We begin with the raw amino-acid sequence, 95 residues long: Late cornified envelope protein 7A (95 aa).

This sequence belongs to the LCE family.

Precursors of the cornified envelope of the stratum corneum. The protein is Late cornified envelope protein 7A of Homo sapiens (Human).